The primary structure comprises 41 residues: Photosystem I reaction center subunit IX (41 aa).

A helical transmembrane segment spans residues 7–27 (YLSTAPVVAFAWLTFTAGFII).

It belongs to the PsaJ family.

The protein resides in the plastid. Its subcellular location is the chloroplast thylakoid membrane. Functionally, may help in the organization of the PsaE and PsaF subunits. The polypeptide is Photosystem I reaction center subunit IX (Stigeoclonium helveticum (Green alga)).